A 377-amino-acid chain; its full sequence is Rhodopsin, long-wavelength (377 aa).

Residues 1–51 (MIAVSGPSYEAFSYGGQARFNNQTVVDKVPPDMLHLIDANWYQYPPLNPMW) lie on the Extracellular side of the membrane. An N-linked (GlcNAc...) asparagine glycan is attached at Asn22. The chain crosses the membrane as a helical span at residues 52–76 (HGILGFVIGMLGFVSAMGNGMVVYI). Residues 77 to 88 (FLSTKSLRTPSN) lie on the Cytoplasmic side of the membrane. Residues 89–113 (LFVINLAISNFLMMFCMSPPMVINC) form a helical membrane-spanning segment. Over 114–128 (YYETWVLGPLFCQIY) the chain is Extracellular. Cys125 and Cys202 are joined by a disulfide. The helical transmembrane segment at 129 to 148 (AMLGSLFGCGSIWTMTMIAF) threads the bilayer. Residues 149–167 (DRYNVIVKGLSGKPLSING) lie on the Cytoplasmic side of the membrane. A helical transmembrane segment spans residues 168 to 191 (ALIRIIAIWLFSLGWTIAPMFGWN). Residues 192-215 (RYVPEGNMTACGTDYFNRGLLSAS) lie on the Extracellular side of the membrane. A glycan (N-linked (GlcNAc...) asparagine) is linked at Asn198. Residues 216 to 243 (YLVCYGIWVYFVPLFLIIYSYWFIIQAV) form a helical membrane-spanning segment. Over 244-278 (AAHEKNMREQAKKMNVASLRSSENQNTSAECKLAK) the chain is Cytoplasmic. A helical transmembrane segment spans residues 279 to 302 (VALMTISLWFMAWTPYLVINFSGI). Over 303–309 (FNLVKIS) the chain is Extracellular. Residues 310–334 (PLFTIWGSLFAKANAVYNPIVYGIS) form a helical membrane-spanning segment. The residue at position 321 (Lys321) is an N6-(retinylidene)lysine. Residues 335-377 (HPKYRAALFAKFPSLACAAEPSSDAVSTTSGTTTVTDNEKSNA) lie on the Cytoplasmic side of the membrane. Residues 357–370 (SDAVSTTSGTTTVT) show a composition bias toward low complexity. Residues 357 to 377 (SDAVSTTSGTTTVTDNEKSNA) form a disordered region.

The protein belongs to the G-protein coupled receptor 1 family. Opsin subfamily. In terms of processing, phosphorylated on some or all of the serine and threonine residues present in the C-terminal region.

The protein localises to the membrane. In terms of biological role, visual pigments are the light-absorbing molecules that mediate vision. They consist of an apoprotein, opsin, covalently linked to 11-cis-retinal. The polypeptide is Rhodopsin, long-wavelength (Apis mellifera (Honeybee)).